The chain runs to 397 residues: Acetate kinase (397 aa).

A Mg(2+)-binding site is contributed by Asn-7. Lys-14 is a binding site for ATP. Arg-88 is a binding site for substrate. Catalysis depends on Asp-145, which acts as the Proton donor/acceptor. ATP-binding positions include 205 to 209 (HLGNG), 279 to 281 (DMR), and 326 to 330 (GIGEN). Glu-380 serves as a coordination point for Mg(2+).

This sequence belongs to the acetokinase family. As to quaternary structure, homodimer. It depends on Mg(2+) as a cofactor. Mn(2+) serves as cofactor.

The protein localises to the cytoplasm. The catalysed reaction is acetate + ATP = acetyl phosphate + ADP. It participates in metabolic intermediate biosynthesis; acetyl-CoA biosynthesis; acetyl-CoA from acetate: step 1/2. Catalyzes the formation of acetyl phosphate from acetate and ATP. Can also catalyze the reverse reaction. This Campylobacter concisus (strain 13826) protein is Acetate kinase.